The primary structure comprises 898 residues: Probable LRR receptor-like serine/threonine-protein kinase At4g20450 (898 aa).

A signal peptide spans 1-24 (MEGIHKLIFLALIWIFLITNIVDA). Over 25 to 535 (QDQQGFISLD…TGPGNNKKKL (511 aa)) the chain is Extracellular. N-linked (GlcNAc...) asparagine glycosylation is found at Asn40, Asn52, Asn98, Asn247, Asn253, Asn420, Asn443, Asn465, Asn484, and Asn489. LRR repeat units lie at residues 455–477 (QLQK…LAKM), 479–501 (LLTF…LLNM), and 505–526 (GLIT…ESET). The chain crosses the membrane as a helical span at residues 536–556 (LVPILASAASVGIIIAVLLLV). Residues 557–898 (NILLLRKKKP…FGPEHIPDAR (342 aa)) are Cytoplasmic-facing. Thr582 bears the Phosphothreonine mark. The 274-residue stretch at 591 to 864 (NNFERPLGEG…QVANELQECL (274 aa)) folds into the Protein kinase domain. Residues 597-605 (LGEGGFGVV) and Lys619 each bind ATP. At Tyr664 the chain carries Phosphotyrosine. The active-site Proton acceptor is the Asp716. Ser750 carries the post-translational modification Phosphoserine. The residue at position 751 (Thr751) is a Phosphothreonine. At Tyr764 the chain carries Phosphotyrosine. The segment at 864–898 (LLTENSRKGGRHDVDSKSSLEQSTSFGPEHIPDAR) is disordered. Over residues 868–881 (NSRKGGRHDVDSKS) the composition is skewed to basic and acidic residues.

This sequence belongs to the protein kinase superfamily. Ser/Thr protein kinase family.

The protein resides in the membrane. The catalysed reaction is L-seryl-[protein] + ATP = O-phospho-L-seryl-[protein] + ADP + H(+). The enzyme catalyses L-threonyl-[protein] + ATP = O-phospho-L-threonyl-[protein] + ADP + H(+). This is Probable LRR receptor-like serine/threonine-protein kinase At4g20450 from Arabidopsis thaliana (Mouse-ear cress).